The chain runs to 668 residues: ATP-dependent RNA helicase MSS116, mitochondrial (668 aa).

The transit peptide at 1–38 directs the protein to the mitochondrion; it reads MLKQLSRSLGIRSSPIVANLIRSKQVCTRGFHISLVKQ. A Q motif motif is present at residues 87–115; that stretch reads DFKGKGYIHDSIINSLHKNDFKELTPIQQ. The region spanning 119-300 is the Helicase ATP-binding domain; the sequence is VPIFNTEKGL…KKHIHPEYEF (182 aa). 132 to 139 contacts ATP; sequence AKTGTGKT. The DEAD box signature appears at 242–245; sequence DEAD. A Helicase C-terminal domain is found at 332–501; that stretch reads SLSELHGIMK…NIIDQIESPL (170 aa). Residues 585–668 form a disordered region; the sequence is YSDFSRSGMS…EHRRIRDHDE (84 aa). Residues 586 to 597 show a composition bias toward polar residues; the sequence is SDFSRSGMSQRP. Over residues 609–636 the composition is skewed to low complexity; it reads NGRGKYGNNRNNDWSYQNKNRYNNNNNR. A compositionally biased stretch (basic and acidic residues) spans 637 to 668; the sequence is QTERSYDSDRKSHNDWKYEKKFEHRRIRDHDE.

It belongs to the DEAD box helicase family. DDX18/HAS1 subfamily.

The protein localises to the mitochondrion matrix. It carries out the reaction ATP + H2O = ADP + phosphate + H(+). ATP-dependent RNA helicase required for mitochondrial splicing of group I and II introns. Also required for efficient mitochondrial translation. The sequence is that of ATP-dependent RNA helicase MSS116, mitochondrial (MSS116) from Candida albicans (strain SC5314 / ATCC MYA-2876) (Yeast).